The following is a 288-amino-acid chain: S-methyl-5'-thioadenosine phosphorylase (288 aa).

Phosphate contacts are provided by residues S10, R52–H53, and T85–A86. M188 contributes to the substrate binding site. Position 189 (T189) interacts with phosphate. D212–D214 serves as a coordination point for substrate.

This sequence belongs to the PNP/MTAP phosphorylase family. MTAP subfamily. As to quaternary structure, homotrimer.

Its subcellular location is the cytoplasm. It localises to the nucleus. The catalysed reaction is S-methyl-5'-thioadenosine + phosphate = 5-(methylsulfanyl)-alpha-D-ribose 1-phosphate + adenine. It participates in amino-acid biosynthesis; L-methionine biosynthesis via salvage pathway; S-methyl-5-thio-alpha-D-ribose 1-phosphate from S-methyl-5'-thioadenosine (phosphorylase route): step 1/1. Functionally, catalyzes the reversible phosphorylation of S-methyl-5'-thioadenosine (MTA) to adenine and 5-methylthioribose-1-phosphate. Involved in the breakdown of MTA, a major by-product of polyamine biosynthesis. Responsible for the first step in the methionine salvage pathway after MTA has been generated from S-adenosylmethionine. Has broad substrate specificity with 6-aminopurine nucleosides as preferred substrates. The protein is S-methyl-5'-thioadenosine phosphorylase of Caenorhabditis elegans.